The following is a 150-amino-acid chain: Globin-5 (150 aa).

The region spanning 11 to 150 is the Globin domain; that stretch reads PLSAAEKTKI…MICILLRSAY (140 aa). Residues H74 and H106 each contribute to the heme b site.

This sequence belongs to the globin family. As to quaternary structure, monomer at high oxygen tension and high pH and dimeric at low oxygen tension and lower pH.

This Petromyzon marinus (Sea lamprey) protein is Globin-5.